The primary structure comprises 96 residues: Neurotoxin 23 (96 aa).

The first 22 residues, 1–22, serve as a signal peptide directing secretion; it reads MKNIVIIITVAVLFNLFGESLQ. An LCN-type CS-alpha/beta domain is found at 26 to 89; the sequence is FETYPLNQDD…FLAEIIDTCN (64 aa). 3 disulfides stabilise this stretch: cysteine 40–cysteine 63, cysteine 49–cysteine 68, and cysteine 53–cysteine 70.

The protein belongs to the long (3 C-C) scorpion toxin superfamily. Expressed by the venom gland.

The protein resides in the secreted. The protein is Neurotoxin 23 of Lychas mucronatus (Chinese swimming scorpion).